A 916-amino-acid polypeptide reads, in one-letter code: MANYQTAHAQERRIQELDQTVESIFDVRKRMGKGAYGIVWKATDRRTKNTVALKKVFDAFRDETDAQRTYREVIFLRAFRCHPNIVRLVDIFKASNNLDFYLVFEFMESDLHNVIKRGNVLKDVHKRFVMYQLINAIKFIHSGNVIHRDLKPSNILIDSKCRLKVADFGLARTLSSRRIYDDLEQDGMLTDYVATRWYRAPEILVASRNYTKGIDMWGLGCILGEMIRQKPLFQGTSTVNQIEKIVTSLPNVTKLDIASIGPSFGSVLLSRNIQRDRRYSLDEMMKNCCDDGISLVKALLVLNPHNRLTAKEAIRHPYVSRFQYASAEMDLHMDVVPPLKDHVRYDVDQYRNSLYELIDRETSCSNRTVSNSTPSSNRDELPKPVRVTKQARTTSAKQPTTSPAERKKEPSSVEVTQSRKNIKLLGSAHKAQSKEINHMESAITQVSIASAPPAAAPPAPAATAPAVPRKSGDKSVPKCQHNNAAVQRELAAVAAAAAVARRKKSSWQSQAQSQGKFHTEAKAHVQTAIQTQKDNIKDSPPRMIQESQSLTEAKAPIPKNRYSNKMCQEKKYKKKHHSMSCITRDTFPSETEHRQQREERAYQRQMKRELQLKESYRRRIEAESEPLKETTEQESKTIKVIEQKVCEHTEKKADESLSKDQQKDSITFGTCVRERIHHLELEMEKCTEELVDFVELNADVLNYANVSTHLKKLQRSKESDEKDEDDRRALPEGIGGPGSQNYEIFRQEQEKERQRQVQEFLARDETNEYDNLDLDHAYRAKYYTAYKEIGKELNPAPDSGGRDSGSEHSPGRDNYTTYADYFLKYTTPQQNWNDLERANGLQREHDRIYGLFWLNDRRQEEKYRRKLAQNDQEELPVHHHKACRHRHHKPNHHAPYDHMRPTEDDIQEADSLPESN.

Residues 25–319 (FDVRKRMGKG…AKEAIRHPYV (295 aa)) form the Protein kinase domain. Residues 31 to 39 (MGKGAYGIV) and lysine 54 contribute to the ATP site. Aspartate 149 serves as the catalytic Proton acceptor. 2 stretches are compositionally biased toward polar residues: residues 364–376 (CSNR…TPSS) and 390–403 (QART…TTSP). 6 disordered regions span residues 364-419 (CSNR…TQSR), 452-477 (PPAA…KSVP), 588-608 (PSET…QMKR), 711-742 (KKLQ…SQNY), 792-813 (ELNP…PGRD), and 883-916 (CRHR…PESN). Composition is skewed to basic and acidic residues over residues 590–608 (ETEH…QMKR), 715–730 (RSKE…RRAL), and 800–811 (GGRDSGSEHSPG). Basic residues predominate over residues 883-892 (CRHRHHKPNH). Positions 894–903 (APYDHMRPTE) are enriched in basic and acidic residues.

It belongs to the protein kinase superfamily. Ser/Thr protein kinase family.

The catalysed reaction is L-seryl-[protein] + ATP = O-phospho-L-seryl-[protein] + ADP + H(+). It carries out the reaction L-threonyl-[protein] + ATP = O-phospho-L-threonyl-[protein] + ADP + H(+). Atypical MAPK protein that regulates protein secretion in a kinase activity-dependent manner. In response to starvation regulates protein secretion by mediating transitional endoplasmic reticulum site disassembly. Mediates inhibition of insulin-like peptide secretion upon disturbed ribosome biogenesis and acts as a downstream effector of TP53. In Drosophila melanogaster (Fruit fly), this protein is Extracellular signal-regulated kinase 7.